A 271-amino-acid chain; its full sequence is Putative phosphoenolpyruvate synthase regulatory protein (271 aa).

Position 152 to 159 (152 to 159 (GASRSGKT)) interacts with ADP.

Belongs to the pyruvate, phosphate/water dikinase regulatory protein family. PSRP subfamily.

It catalyses the reaction [pyruvate, water dikinase] + ADP = [pyruvate, water dikinase]-phosphate + AMP + H(+). It carries out the reaction [pyruvate, water dikinase]-phosphate + phosphate + H(+) = [pyruvate, water dikinase] + diphosphate. In terms of biological role, bifunctional serine/threonine kinase and phosphorylase involved in the regulation of the phosphoenolpyruvate synthase (PEPS) by catalyzing its phosphorylation/dephosphorylation. In Marinobacter nauticus (strain ATCC 700491 / DSM 11845 / VT8) (Marinobacter aquaeolei), this protein is Putative phosphoenolpyruvate synthase regulatory protein.